Reading from the N-terminus, the 50-residue chain is Sperm protamine P1 (50 aa).

This sequence belongs to the protamine P1 family. In terms of assembly, cross-linked by interchain disulfide bonds around the DNA-helix. In terms of tissue distribution, testis.

It localises to the nucleus. The protein localises to the chromosome. Protamines substitute for histones in the chromatin of sperm during the haploid phase of spermatogenesis. They compact sperm DNA into a highly condensed, stable and inactive complex. The polypeptide is Sperm protamine P1 (PRM1) (Saimiri sciureus (Common squirrel monkey)).